The sequence spans 350 residues: Biotin synthase (350 aa).

In terms of domain architecture, Radical SAM core spans asparagine 38–glutamine 256. [4Fe-4S] cluster is bound by residues cysteine 53, cysteine 57, and cysteine 60. Residues cysteine 97, cysteine 128, cysteine 188, and arginine 260 each contribute to the [2Fe-2S] cluster site.

It belongs to the radical SAM superfamily. Biotin synthase family. Homodimer. It depends on [4Fe-4S] cluster as a cofactor. Requires [2Fe-2S] cluster as cofactor.

It carries out the reaction (4R,5S)-dethiobiotin + (sulfur carrier)-SH + 2 reduced [2Fe-2S]-[ferredoxin] + 2 S-adenosyl-L-methionine = (sulfur carrier)-H + biotin + 2 5'-deoxyadenosine + 2 L-methionine + 2 oxidized [2Fe-2S]-[ferredoxin]. The protein operates within cofactor biosynthesis; biotin biosynthesis; biotin from 7,8-diaminononanoate: step 2/2. In terms of biological role, catalyzes the conversion of dethiobiotin (DTB) to biotin by the insertion of a sulfur atom into dethiobiotin via a radical-based mechanism. This is Biotin synthase from Vibrio campbellii (strain ATCC BAA-1116).